Reading from the N-terminus, the 121-residue chain is Small ribosomal subunit protein uS12c (121 aa).

This sequence belongs to the universal ribosomal protein uS12 family. In terms of assembly, part of the 30S ribosomal subunit.

The protein resides in the plastid. The protein localises to the chloroplast. In terms of biological role, with S4 and S5 plays an important role in translational accuracy. Located at the interface of the 30S and 50S subunits. The protein is Small ribosomal subunit protein uS12c (rps12) of Bigelowiella natans (Pedinomonas minutissima).